Consider the following 714-residue polypeptide: Ribonucleoside-diphosphate reductase 2 subunit alpha (714 aa).

Residues Thr161, 177-178 (SC), Gly206, 386-390 (NLCSE), and 588-592 (PTGSI) each bind substrate. A disulfide bond links Cys178 and Cys415. Residue Asn386 is the Proton acceptor of the active site. The active-site Cysteine radical intermediate is Cys388. The Proton acceptor role is filled by Glu390.

This sequence belongs to the ribonucleoside diphosphate reductase large chain family. As to quaternary structure, tetramer of two alpha and two beta subunits.

It carries out the reaction a 2'-deoxyribonucleoside 5'-diphosphate + [thioredoxin]-disulfide + H2O = a ribonucleoside 5'-diphosphate + [thioredoxin]-dithiol. Its activity is regulated as follows. Under complex allosteric control mediated by deoxynucleoside triphosphates and ATP binding. The type of nucleotide bound at the specificity site determines substrate preference. It seems probable that ATP makes the enzyme reduce CDP and UDP, dGTP favors ADP reduction and dTTP favors GDP reduction. Lacks the N-terminal activity site. In terms of biological role, provides the precursors necessary for DNA synthesis. Catalyzes the biosynthesis of deoxyribonucleotides from the corresponding ribonucleotides. R1E contains the binding sites for both substrates and allosteric effectors and carries out the actual reduction of the ribonucleotide. This chain is Ribonucleoside-diphosphate reductase 2 subunit alpha (nrdE), found in Salmonella typhimurium (strain LT2 / SGSC1412 / ATCC 700720).